Reading from the N-terminus, the 99-residue chain is Small ribosomal subunit protein bS20 (99 aa).

Belongs to the bacterial ribosomal protein bS20 family.

Functionally, binds directly to 16S ribosomal RNA. The chain is Small ribosomal subunit protein bS20 from Caldicellulosiruptor bescii (strain ATCC BAA-1888 / DSM 6725 / KCTC 15123 / Z-1320) (Anaerocellum thermophilum).